A 284-amino-acid polypeptide reads, in one-letter code: tRNA-splicing endonuclease (284 aa).

Residues Tyr222, His229, and Lys257 contribute to the active site.

This sequence belongs to the tRNA-intron endonuclease family. Archaeal long subfamily. As to quaternary structure, homodimer.

It catalyses the reaction pretRNA = a 3'-half-tRNA molecule with a 5'-OH end + a 5'-half-tRNA molecule with a 2',3'-cyclic phosphate end + an intron with a 2',3'-cyclic phosphate and a 5'-hydroxyl terminus.. Endonuclease that removes tRNA introns. Cleaves pre-tRNA at the 5'- and 3'-splice sites to release the intron. The products are an intron and two tRNA half-molecules bearing 2',3' cyclic phosphate and 5'-OH termini. Recognizes a pseudosymmetric substrate in which 2 bulged loops of 3 bases are separated by a stem of 4 bp. The protein is tRNA-splicing endonuclease of Picrophilus torridus (strain ATCC 700027 / DSM 9790 / JCM 10055 / NBRC 100828 / KAW 2/3).